Reading from the N-terminus, the 471-residue chain is Galactolipase DONGLE, chloroplastic (471 aa).

The N-terminal 88 residues, 1–88 (MAAKVFTQNP…PLSRVWREIQ (88 aa)), are a transit peptide targeting the chloroplast. Residues 44 to 71 (SSSTMSPPISSSPLSLPSSSSSQAIPPS) form a disordered region. The GXSXG signature appears at 284–288 (GHSMG). The Acyl-ester intermediate role is filled by Ser-286. Catalysis depends on charge relay system residues Asp-349 and His-400.

It belongs to the AB hydrolase superfamily. Lipase family. As to expression, expressed in leaves and seedlings. Not detected in flowers, siliques or roots.

The protein resides in the plastid. It is found in the chloroplast. It carries out the reaction a 1,2-diacyl-3-O-(beta-D-galactosyl)-sn-glycerol + 2 H2O = 3-beta-D-galactosyl-sn-glycerol + 2 a fatty acid + 2 H(+). It catalyses the reaction a 1,2-diacyl-sn-glycero-3-phosphocholine + H2O = a 2-acyl-sn-glycero-3-phosphocholine + a fatty acid + H(+). The catalysed reaction is a 1,2-diacyl-3-O-[alpha-D-galactosyl-(1-&gt;6)-beta-D-galactosyl]-sn-glycerol + H2O = acyl-3-O-[alpha-D-galactosyl-(1-&gt;6)-beta-D-galactosyl]-sn-glycerol + a fatty acid + H(+). Its function is as follows. Sn-1-specific phospholipase that releases free fatty acids from phosphatidylcholine. Has a higher galactolipase activity than phospholipase A1 activity when digalactosyldiacylglycerol (DGDG) is used as substrate. Catalyzes the initial step of jasmonic acid biosynthesis. Required for the biosynthesis of basal-level endogenous jasmonate in vegetative tissues. Regulates leaves growth. Not essential for jasmonate biosynthesis after wounding or upon pathogen infection. This is Galactolipase DONGLE, chloroplastic from Arabidopsis thaliana (Mouse-ear cress).